A 98-amino-acid polypeptide reads, in one-letter code: Cytochrome c-552 (98 aa).

The first 18 residues, 1 to 18 (MKKFLLVAVVGLAGITFA), serve as a signal peptide directing secretion. Heme c-binding residues include C28, C31, H32, and M77.

Belongs to the cytochrome c family. Binds 1 heme c group covalently per subunit.

In terms of biological role, reacts with hydrogenase. This Hydrogenobacter thermophilus (strain DSM 6534 / IAM 12695 / TK-6) protein is Cytochrome c-552.